Reading from the N-terminus, the 327-residue chain is Zinc finger protein 444 (327 aa).

N-acetylmethionine is present on methionine 1. Lysine 8 participates in a covalent cross-link: Glycyl lysine isopeptide (Lys-Gly) (interchain with G-Cter in SUMO2). Phosphoserine occurs at positions 18 and 104. The SCAN box domain occupies 20-104 (WHRFRRFHLG…LEELWGPAAS (85 aa)). Residues 101–171 (PAASPDGSSA…SPPLAPGLPA (71 aa)) are disordered. A compositionally biased stretch (polar residues) spans 106-118 (DGSSATRVPQDVT). Over residues 134-148 (PLAGTAPGAEGPAPG) the composition is skewed to low complexity. 2 consecutive C2H2-type zinc fingers follow at residues 179–201 (TSCPECGKTSLKPAHLLRHRQSH) and 207–229 (HACPECGKAFRRKEHLRRHRDTH). Lysine 190 is covalently cross-linked (Glycyl lysine isopeptide (Lys-Gly) (interchain with G-Cter in SUMO2)). The segment at 220 to 243 (EHLRRHRDTHPGSPGSPGPALRPL) is disordered. Phosphoserine is present on serine 235. 2 consecutive C2H2-type zinc fingers follow at residues 250 to 272 (HACCECGKTFYWREHLVRHRKTH) and 278 to 300 (FACWECGKGFGRREHVLRHQRIH). Residues 305–314 (ASAQGAVAPG) show a composition bias toward low complexity. Residues 305–327 (ASAQGAVAPGPDGGGPFPPWPLG) are disordered.

The protein belongs to the krueppel C2H2-type zinc-finger protein family.

It is found in the nucleus. In terms of biological role, transcriptional regulator. Binds to the 5'-flanking critical region of the SCARF1 promoter. The polypeptide is Zinc finger protein 444 (ZNF444) (Homo sapiens (Human)).